The primary structure comprises 719 residues: CRAL-TRIO domain-containing protein T23G5.2 (719 aa).

In terms of domain architecture, PRELI/MSF1 spans 2-175; that stretch reads VQTYRSPVRI…FIEELLKKTT (174 aa). Residues 319-495 enclose the CRAL-TRIO domain; the sequence is RPTVIKQYFP…FLGGSCLTTN (177 aa). Residues 524-681 form the GOLD domain; the sequence is HSTYTSTATW…KCRLIYYYEI (158 aa). Residues 700 to 719 are disordered; sequence SSFSSIAPPTPPTPGTPRNP. A compositionally biased stretch (pro residues) spans 707–719; sequence PPTPPTPGTPRNP.

This is CRAL-TRIO domain-containing protein T23G5.2 from Caenorhabditis elegans.